Consider the following 75-residue polypeptide: MASLKKSLFLVLLLGFVSVSICEEEKRQEDEDEHEEEGESQEEGSEEKRGLLSVLGSVAKHVLPHVVPVIAEHLG.

A signal peptide spans 1–22; it reads MASLKKSLFLVLLLGFVSVSIC. The propeptide occupies 23–49; sequence EEEKRQEDEDEHEEEGESQEEGSEEKR. The tract at residues 24–49 is disordered; it reads EEKRQEDEDEHEEEGESQEEGSEEKR. Residues 30–45 show a composition bias toward acidic residues; that stretch reads DEDEHEEEGESQEEGS. At Leu-74 the chain carries Leucine amide.

This sequence belongs to the frog skin active peptide (FSAP) family. Caerin subfamily. Post-translationally, the major product is Caerin-1.1; in addition, different peptides are produced that are missing some amino acid residues at the N-terminus or C-terminus. Caerin-1.1.1 and Caerin-1.1.4 are inactive. In terms of tissue distribution, expressed by the skin parotoid and/or rostral glands.

Its subcellular location is the secreted. In terms of biological role, antimicrobial peptide with antibacterial and antiviral activities. Adopts an alpha helical conformation which can disrupt bacterial membranes. Inhibits the formation of NO by neuronal nitric oxide synthase (nNOS) at micromolar concentrations. Acts by a non-competitive mechanism, probably by binding to calcium/calmodulin and as a consequence blocking calmodulin attachment to nNOS. Is inactive. The polypeptide is Caerin-1.1 (Ranoidea caerulea (Green tree frog)).